Consider the following 93-residue polypeptide: Alpha-defensin 26 (93 aa).

A signal peptide spans Met1–Ala19. Residues Asp20–Ser58 constitute a propeptide that is removed on maturation. The tract at residues Asn24–Gln55 is disordered. The segment covering Thr25–Gln40 has biased composition (acidic residues). 3 disulfide bridges follow: Cys64/Cys92, Cys66/Cys81, and Cys71/Cys91.

This sequence belongs to the alpha-defensin family.

It localises to the secreted. Functionally, may have microbicidal activities. The chain is Alpha-defensin 26 (Defa26) from Mus musculus (Mouse).